The following is a 35-amino-acid chain: Basic endochitinase CH1 (35 aa).

This sequence belongs to the glycosyl hydrolase 19 family. Chitinase class I subfamily.

The enzyme catalyses Random endo-hydrolysis of N-acetyl-beta-D-glucosaminide (1-&gt;4)-beta-linkages in chitin and chitodextrins.. Functionally, defense against chitin-containing fungal pathogens. The protein is Basic endochitinase CH1 of Castanea sativa (Sweet chestnut).